The primary structure comprises 340 residues: Olfactory receptor 5T3 (340 aa).

At 1 to 55 the chain is on the extracellular side; the sequence is MDSTFTGYNLYNLQVKTEMDKLSSGLDIYRNPLKNKTEVTMFILTGFTDDFELQV. The N-linked (GlcNAc...) asparagine glycan is linked to Asn35. A helical transmembrane segment spans residues 56–76; that stretch reads FLFLLFFAIYLFTLIGNLGLV. The Cytoplasmic portion of the chain corresponds to 77 to 84; sequence VLVIEDSW. A helical transmembrane segment spans residues 85 to 105; it reads LHNPMYYFLSVLSFLDACYST. Residues 106–129 lie on the Extracellular side of the membrane; that stretch reads VVTPKMLVNFLAKNKSISFIGCAT. Asn119 is a glycosylation site (N-linked (GlcNAc...) asparagine). Cys127 and Cys219 form a disulfide bridge. Residues 130-150 form a helical membrane-spanning segment; it reads QMLLFVTFGTTECFLLAAMAY. Residues 151-169 are Cytoplasmic-facing; that stretch reads DHYVAIYNPLLYSVSMSPR. A helical transmembrane segment spans residues 170-190; that stretch reads VYVPLITASYVAGILHATIHI. Residues 191-226 lie on the Extracellular side of the membrane; that stretch reads VATFSLSFCGSNEIRHVFCDMPPLLAISCSDTHTNQ. Residues 227-247 traverse the membrane as a helical segment; it reads LLLFYFVGSIEIVTILIVLIS. Residues 248 to 267 are Cytoplasmic-facing; it reads CDFILLSILKMHSAKGRQKA. Residues 268–288 traverse the membrane as a helical segment; it reads FSTCGSHLTGVTIYHGTILVS. The Extracellular segment spans residues 289-301; it reads YMRPSSSYASDHD. Residues 302 to 322 traverse the membrane as a helical segment; that stretch reads IIVSIFYTIVIPKLNPIIYSL. Topologically, residues 323 to 340 are cytoplasmic; sequence RNKEVKKAVKKMLKLVYK.

The protein belongs to the G-protein coupled receptor 1 family.

Its subcellular location is the cell membrane. In terms of biological role, odorant receptor. This is Olfactory receptor 5T3 (OR5T3) from Homo sapiens (Human).